Here is a 339-residue protein sequence, read N- to C-terminus: 3-isopropylmalate dehydrogenase (339 aa).

The substrate site is built by Arg88, Arg98, Arg122, and Asp212. 3 residues coordinate Mg(2+): Asp212, Asp236, and Asp240. 272–284 is a binding site for NAD(+); that stretch reads GSAPDIAGQGIAD.

Belongs to the isocitrate and isopropylmalate dehydrogenases family. LeuB type 2 subfamily. In terms of assembly, homodimer. Mg(2+) is required as a cofactor. Requires Mn(2+) as cofactor.

The protein resides in the cytoplasm. The catalysed reaction is (2R,3S)-3-isopropylmalate + NAD(+) = 4-methyl-2-oxopentanoate + CO2 + NADH. The protein operates within amino-acid biosynthesis; L-leucine biosynthesis; L-leucine from 3-methyl-2-oxobutanoate: step 3/4. In terms of biological role, catalyzes the oxidation of 3-carboxy-2-hydroxy-4-methylpentanoate (3-isopropylmalate) to 3-carboxy-4-methyl-2-oxopentanoate. The product decarboxylates to 4-methyl-2 oxopentanoate. This chain is 3-isopropylmalate dehydrogenase, found in Corynebacterium diphtheriae (strain ATCC 700971 / NCTC 13129 / Biotype gravis).